The following is a 60-amino-acid chain: Ribosome biogenesis protein Nop10 (60 aa).

Residues Ala37 to Leu60 form a disordered region. The span at Lys49 to Leu60 shows a compositional bias: basic residues.

It belongs to the NOP10 family.

Functionally, involved in ribosome biogenesis; more specifically in 18S rRNA pseudouridylation and in cleavage of pre-rRNA. The protein is Ribosome biogenesis protein Nop10 of Halobacterium salinarum (strain ATCC 29341 / DSM 671 / R1).